We begin with the raw amino-acid sequence, 404 residues long: Probable tRNA sulfurtransferase (404 aa).

Residues 60-165 (TAVAESLKQV…EEAAYLSYET (106 aa)) enclose the THUMP domain. ATP is bound by residues 183–184 (ML), 208–209 (HF), Arg265, Gly287, and Gln296.

This sequence belongs to the ThiI family.

The protein resides in the cytoplasm. It catalyses the reaction [ThiI sulfur-carrier protein]-S-sulfanyl-L-cysteine + a uridine in tRNA + 2 reduced [2Fe-2S]-[ferredoxin] + ATP + H(+) = [ThiI sulfur-carrier protein]-L-cysteine + a 4-thiouridine in tRNA + 2 oxidized [2Fe-2S]-[ferredoxin] + AMP + diphosphate. The enzyme catalyses [ThiS sulfur-carrier protein]-C-terminal Gly-Gly-AMP + S-sulfanyl-L-cysteinyl-[cysteine desulfurase] + AH2 = [ThiS sulfur-carrier protein]-C-terminal-Gly-aminoethanethioate + L-cysteinyl-[cysteine desulfurase] + A + AMP + 2 H(+). It participates in cofactor biosynthesis; thiamine diphosphate biosynthesis. Functionally, catalyzes the ATP-dependent transfer of a sulfur to tRNA to produce 4-thiouridine in position 8 of tRNAs, which functions as a near-UV photosensor. Also catalyzes the transfer of sulfur to the sulfur carrier protein ThiS, forming ThiS-thiocarboxylate. This is a step in the synthesis of thiazole, in the thiamine biosynthesis pathway. The sulfur is donated as persulfide by IscS. This is Probable tRNA sulfurtransferase from Streptococcus pneumoniae (strain ATCC 700669 / Spain 23F-1).